A 760-amino-acid polypeptide reads, in one-letter code: Xaa-Pro dipeptidyl-peptidase (760 aa).

Catalysis depends on charge relay system residues S349, D469, and H499.

It belongs to the peptidase S15 family. In terms of assembly, homodimer.

The protein localises to the cytoplasm. It catalyses the reaction Hydrolyzes Xaa-Pro-|- bonds to release unblocked, N-terminal dipeptides from substrates including Ala-Pro-|-p-nitroanilide and (sequentially) Tyr-Pro-|-Phe-Pro-|-Gly-Pro-|-Ile.. In terms of biological role, removes N-terminal dipeptides sequentially from polypeptides having unsubstituted N-termini provided that the penultimate residue is proline. This chain is Xaa-Pro dipeptidyl-peptidase, found in Streptococcus pyogenes serotype M12 (strain MGAS9429).